The primary structure comprises 303 residues: Sodium/potassium-transporting ATPase subunit beta-1 (303 aa).

The Cytoplasmic segment spans residues 1-34 (MPAATKDSDGGWKKFLWNSEKKEFLGRTGGSWAK). The chain crosses the membrane as a helical; Signal-anchor for type II membrane protein span at residues 35–55 (ILLFYVIFYGCLAGIFIGTIQ). Over 56 to 303 (ALLLTINDFK…FDVKFTINES (248 aa)) the chain is Extracellular. N113 carries an N-linked (GlcNAc...) asparagine glycan. 2 disulfide bridges follow: C126–C149 and C159–C175. N194 and N264 each carry an N-linked (GlcNAc...) asparagine glycan. C214 and C275 form a disulfide bridge.

Belongs to the X(+)/potassium ATPases subunit beta family. In terms of assembly, the sodium/potassium-transporting ATPase is composed of a catalytic alpha subunit, an auxiliary non-catalytic beta subunit and an additional regulatory subunit. In terms of tissue distribution, detected in all tissues except liver and cardiac muscle. Highest levels found in intestine, ovary and kidney with marginally lower levels in brain, spleen, esophagus, eye and pancreas, intermediate levels in gill and low levels in white and red skeletal muscle.

It is found in the cell membrane. Functionally, this is the non-catalytic component of the active enzyme, which catalyzes the hydrolysis of ATP coupled with the exchange of Na(+) and K(+) ions across the plasma membrane. The beta subunit regulates, through assembly of alpha/beta heterodimers, the number of sodium pumps transported to the plasma membrane. The protein is Sodium/potassium-transporting ATPase subunit beta-1 (atp1b1) of Anguilla anguilla (European freshwater eel).